The chain runs to 385 residues: Lipid-A-disaccharide synthase (385 aa).

The protein belongs to the LpxB family.

The catalysed reaction is a lipid X + a UDP-2-N,3-O-bis[(3R)-3-hydroxyacyl]-alpha-D-glucosamine = a lipid A disaccharide + UDP + H(+). The protein operates within bacterial outer membrane biogenesis; LPS lipid A biosynthesis. Functionally, condensation of UDP-2,3-diacylglucosamine and 2,3-diacylglucosamine-1-phosphate to form lipid A disaccharide, a precursor of lipid A, a phosphorylated glycolipid that anchors the lipopolysaccharide to the outer membrane of the cell. The protein is Lipid-A-disaccharide synthase of Xylella fastidiosa (strain M23).